Here is a 43-residue protein sequence, read N- to C-terminus: uncharacterized protein (43 aa).

Positions 1 to 43 are disordered; it reads MFKSRIETGGFQFQVHGDDESAMDDEFIDDDDDQQVVEPVTDN. The segment covering 20 to 35 has biased composition (acidic residues); that stretch reads ESAMDDEFIDDDDDQQ.

This is an uncharacterized protein from Dictyostelium discoideum (Social amoeba).